The chain runs to 449 residues: Protein trichome birefringence-like 35 (449 aa).

A helical; Signal-anchor for type II membrane protein membrane pass occupies residues 12–29 (LPLAGLLFILVVTFMILF). The GDS motif motif lies at 185–187 (GDS). Residues 428–442 (DCTHWCVPGVPDVWN) carry the DCXHWCLPGXXDXWN motif motif.

This sequence belongs to the PC-esterase family. TBL subfamily.

It localises to the membrane. May act as a bridging protein that binds pectin and other cell wall polysaccharides. Probably involved in maintaining esterification of pectins. May be involved in the specific O-acetylation of cell wall polymers. The polypeptide is Protein trichome birefringence-like 35 (TBL35) (Arabidopsis thaliana (Mouse-ear cress)).